The chain runs to 362 residues: Methionine import ATP-binding protein MetN (362 aa).

Positions 2–241 (IHIKNLSKTY…PQHDVTRAMV (240 aa)) constitute an ABC transporter domain. Position 38-45 (38-45 (GPSGAGKS)) interacts with ATP.

Belongs to the ABC transporter superfamily. Methionine importer (TC 3.A.1.24) family. In terms of assembly, the complex is composed of two ATP-binding proteins (MetN), two transmembrane proteins (MetI) and a solute-binding protein (MetQ).

It is found in the cell inner membrane. The catalysed reaction is L-methionine(out) + ATP + H2O = L-methionine(in) + ADP + phosphate + H(+). It carries out the reaction D-methionine(out) + ATP + H2O = D-methionine(in) + ADP + phosphate + H(+). Part of the ABC transporter complex MetNIQ involved in methionine import. Responsible for energy coupling to the transport system. This Bordetella avium (strain 197N) protein is Methionine import ATP-binding protein MetN.